The primary structure comprises 121 residues: NAD(P)H-quinone oxidoreductase subunit M (121 aa).

The protein belongs to the complex I NdhM subunit family. As to quaternary structure, NDH-1 can be composed of about 15 different subunits; different subcomplexes with different compositions have been identified which probably have different functions.

It is found in the cellular thylakoid membrane. It catalyses the reaction a plastoquinone + NADH + (n+1) H(+)(in) = a plastoquinol + NAD(+) + n H(+)(out). The enzyme catalyses a plastoquinone + NADPH + (n+1) H(+)(in) = a plastoquinol + NADP(+) + n H(+)(out). Functionally, NDH-1 shuttles electrons from an unknown electron donor, via FMN and iron-sulfur (Fe-S) centers, to quinones in the respiratory and/or the photosynthetic chain. The immediate electron acceptor for the enzyme in this species is believed to be plastoquinone. Couples the redox reaction to proton translocation, and thus conserves the redox energy in a proton gradient. Cyanobacterial NDH-1 also plays a role in inorganic carbon-concentration. The chain is NAD(P)H-quinone oxidoreductase subunit M from Synechococcus sp. (strain JA-3-3Ab) (Cyanobacteria bacterium Yellowstone A-Prime).